Here is a 275-residue protein sequence, read N- to C-terminus: Large ribosomal subunit protein uL2 (275 aa).

Residues 224–275 (AMNPVDHPHGGGEGKAPIGHPGPLTPWGKPALGYKTRKKGKASDKFIIRRRK) form a disordered region. A compositionally biased stretch (basic and acidic residues) spans 264 to 275 (KASDKFIIRRRK).

The protein belongs to the universal ribosomal protein uL2 family. As to quaternary structure, part of the 50S ribosomal subunit. Forms a bridge to the 30S subunit in the 70S ribosome.

Its function is as follows. One of the primary rRNA binding proteins. Required for association of the 30S and 50S subunits to form the 70S ribosome, for tRNA binding and peptide bond formation. It has been suggested to have peptidyltransferase activity; this is somewhat controversial. Makes several contacts with the 16S rRNA in the 70S ribosome. In Thermoanaerobacter pseudethanolicus (strain ATCC 33223 / 39E) (Clostridium thermohydrosulfuricum), this protein is Large ribosomal subunit protein uL2.